Here is a 220-residue protein sequence, read N- to C-terminus: Phosphopantothenoylcysteine decarboxylase (220 aa).

Residues glycine 29–valine 31 and threonine 54–alanine 56 contribute to the FMN site. Residue histidine 91 is the Proton donor of the active site. FMN-binding positions include serine 107–threonine 110 and alanine 141. Residues asparagine 143, arginine 173, and alanine 175 each contribute to the N-[(R)-4-phosphopantothenoyl]-L-cysteine site. Catalysis depends on cysteine 176, which acts as the Proton donor. Methionine 184 is an N-[(R)-4-phosphopantothenoyl]-L-cysteine binding site.

Belongs to the HFCD (homooligomeric flavin containing Cys decarboxylase) superfamily. In terms of assembly, forms homotrimers. Interacts with HIP1. Interacts with HD1 in the dark. The cofactor is FMN. In terms of tissue distribution, expressed in root meristem, shoot apical meristem (SAM), intercalary meristem, floral meristem, embryo and tip of the coleoptile before true leaf emergence.

The protein localises to the nucleus. It catalyses the reaction N-[(R)-4-phosphopantothenoyl]-L-cysteine + H(+) = (R)-4'-phosphopantetheine + CO2. The protein operates within cofactor biosynthesis; coenzyme A biosynthesis; CoA from (R)-pantothenate: step 3/5. Its function is as follows. Catalyzes the decarboxylation of 4'-phosphopantothenoylcysteine to 4'-phosphopantetheine, a key step in coenzyme A biosynthesis. Involved in salt and osmotic tolerance, and light-regulated plant growth. Trimerization of HAL3 recruits and activates the E3 ubiquitin-protein ligase HIP1, which leads to the degradation of cell cycle suppressors, resulting in enhancement of cell division and plant growth. HAL3 function in cell division seems to be independent from its PPC decarboxylase activity. Acts as a positive regulator of flowering by binding to HD1 in the dark. This chain is Phosphopantothenoylcysteine decarboxylase, found in Oryza sativa subsp. japonica (Rice).